We begin with the raw amino-acid sequence, 90 residues long: Putative beta-neurotoxin RjAa14F (90 aa).

Residues 1–18 form the signal peptide; the sequence is MKILIFIIASFMLIGVEC. An LCN-type CS-alpha/beta domain is found at 19–89; that stretch reads KEGYPTNSEG…VWDPNNNKCV (71 aa). 4 disulfide bridges follow: Cys29/Cys88, Cys33/Cys62, Cys40/Cys69, and Cys44/Cys71.

The protein belongs to the long (4 C-C) scorpion toxin superfamily. Sodium channel inhibitor family. Beta subfamily. Expressed by the venom gland.

It is found in the secreted. In terms of biological role, beta toxins bind voltage-independently at site-4 of sodium channels (Nav) and shift the voltage of activation toward more negative potentials thereby affecting sodium channel activation and promoting spontaneous and repetitive firing. The protein is Putative beta-neurotoxin RjAa14F of Rhopalurus junceus (Caribbean blue scorpion).